We begin with the raw amino-acid sequence, 278 residues long: Large ribosomal subunit protein uL2 (278 aa).

Residues 224-278 (VAMNPVDHPHGGGEGRTSGGRNPVTPWGVPTKGKKTRSNKRTDTFILSSRHNRKK) form a disordered region.

The protein belongs to the universal ribosomal protein uL2 family. Part of the 50S ribosomal subunit. Forms a bridge to the 30S subunit in the 70S ribosome.

In terms of biological role, one of the primary rRNA binding proteins. Required for association of the 30S and 50S subunits to form the 70S ribosome, for tRNA binding and peptide bond formation. It has been suggested to have peptidyltransferase activity; this is somewhat controversial. Makes several contacts with the 16S rRNA in the 70S ribosome. The polypeptide is Large ribosomal subunit protein uL2 (Methylorubrum extorquens (strain CM4 / NCIMB 13688) (Methylobacterium extorquens)).